The following is a 58-amino-acid chain: UPF0391 membrane protein Plav_0056 (58 aa).

The next 2 helical transmembrane spans lie at 4 to 24 and 30 to 50; these read WAAV…GGLV and IAQI…IFGV.

It belongs to the UPF0391 family.

It is found in the cell membrane. This Parvibaculum lavamentivorans (strain DS-1 / DSM 13023 / NCIMB 13966) protein is UPF0391 membrane protein Plav_0056.